The following is a 464-amino-acid chain: UDP-N-acetylmuramoylalanine--D-glutamate ligase (464 aa).

112-118 (GTDGKTT) is an ATP binding site.

It belongs to the MurCDEF family.

It localises to the cytoplasm. It catalyses the reaction UDP-N-acetyl-alpha-D-muramoyl-L-alanine + D-glutamate + ATP = UDP-N-acetyl-alpha-D-muramoyl-L-alanyl-D-glutamate + ADP + phosphate + H(+). The protein operates within cell wall biogenesis; peptidoglycan biosynthesis. Cell wall formation. Catalyzes the addition of glutamate to the nucleotide precursor UDP-N-acetylmuramoyl-L-alanine (UMA). The polypeptide is UDP-N-acetylmuramoylalanine--D-glutamate ligase (Pelodictyon phaeoclathratiforme (strain DSM 5477 / BU-1)).